We begin with the raw amino-acid sequence, 356 residues long: Leucine carboxyl methyltransferase 1 (356 aa).

S-adenosyl-L-methionine is bound by residues Arg78, Gly101, Asp127, 183–184 (DL), and Glu218.

Belongs to the methyltransferase superfamily. LCMT family.

It carries out the reaction [phosphatase 2A protein]-C-terminal L-leucine + S-adenosyl-L-methionine = [phosphatase 2A protein]-C-terminal L-leucine methyl ester + S-adenosyl-L-homocysteine. Functionally, methylates the carboxyl group of the C-terminal leucine residue of protein phosphatase 2A catalytic subunits to form alpha-leucine ester residues. This is Leucine carboxyl methyltransferase 1 (PPM1) from Cryptococcus neoformans var. neoformans serotype D (strain JEC21 / ATCC MYA-565) (Filobasidiella neoformans).